The primary structure comprises 175 residues: GTP-dependent dephospho-CoA kinase (175 aa).

The GTP site is built by aspartate 48, valine 49, valine 50, aspartate 66, and glutamate 124.

Belongs to the GTP-dependent DPCK family.

The enzyme catalyses 3'-dephospho-CoA + GTP = GDP + CoA + H(+). It participates in cofactor biosynthesis; coenzyme A biosynthesis. Functionally, catalyzes the GTP-dependent phosphorylation of the 3'-hydroxyl group of dephosphocoenzyme A to form coenzyme A (CoA). This Thermofilum pendens (strain DSM 2475 / Hrk 5) protein is GTP-dependent dephospho-CoA kinase.